Reading from the N-terminus, the 1397-residue chain is DNA-directed RNA polymerase subunit beta' (1397 aa).

Zn(2+)-binding residues include Cys71, Cys73, Cys86, and Cys89. Residues Asp462, Asp464, and Asp466 each coordinate Mg(2+). Residues Cys811, Cys885, Cys892, and Cys895 each contribute to the Zn(2+) site. The interval 1368–1397 is disordered; the sequence is QNRDDKILEDQGGATPTASTEIKEPAEGAA. The span at 1388–1397 shows a compositional bias: basic and acidic residues; sequence EIKEPAEGAA.

Belongs to the RNA polymerase beta' chain family. The RNAP catalytic core consists of 2 alpha, 1 beta, 1 beta' and 1 omega subunit. When a sigma factor is associated with the core the holoenzyme is formed, which can initiate transcription. The cofactor is Mg(2+). Zn(2+) is required as a cofactor.

It carries out the reaction RNA(n) + a ribonucleoside 5'-triphosphate = RNA(n+1) + diphosphate. Functionally, DNA-dependent RNA polymerase catalyzes the transcription of DNA into RNA using the four ribonucleoside triphosphates as substrates. This is DNA-directed RNA polymerase subunit beta' from Parvibaculum lavamentivorans (strain DS-1 / DSM 13023 / NCIMB 13966).